We begin with the raw amino-acid sequence, 340 residues long: ATP synthase subunit a (340 aa).

An N-terminal signal peptide occupies residues 1 to 32; sequence MKRVNVIQAKAFLKVIALLVPLLLNANGPAFA. The next 6 membrane-spanning stretches (helical) occupy residues 107–127, 172–192, 197–217, 236–256, 269–289, and 296–316; these read HVVMLWVVSAILLILFSLVGS, LLTVFFFVLLCNLLGLVPYGA, NINVTLTLATFTFFITQVAAL, ALWIIMIPIEFIGLFTKPVAL, IVILSLIFISFILQSYIVAVV, and IFIYLLELFVAFLQAFIFTML.

Belongs to the ATPase A chain family. F-type ATPases have 2 components, CF(1) - the catalytic core - and CF(0) - the membrane proton channel. CF(1) has five subunits: alpha(3), beta(3), gamma(1), delta(1), epsilon(1). CF(0) has four main subunits: a, b, b' and c.

Its subcellular location is the cell inner membrane. Key component of the proton channel; it plays a direct role in the translocation of protons across the membrane. This Pelodictyon phaeoclathratiforme (strain DSM 5477 / BU-1) protein is ATP synthase subunit a.